We begin with the raw amino-acid sequence, 483 residues long: MTSYSISVSVKGTNINKYPGKQHARRVAARLAKQKGLIYLPGQQTVLSEDSDQARPFKQRRYFFYVTGVVEPDCHVTYDIAEDKLTLYVPDFDFKRTIWTGPTLGKDDAKQRYDVDAVEYYSSLEGDVQRWAQGNPSTPIYILHPDQKPVTPLTVAYLYESKSLQHAMDACRVIKDEHESEAQIAGLFIDVCLSLRSRGTAYQTIAASGPNGATLHYTRNNEPLAGRQMVVLDAGAEWDCYASDVTRSFPIPSSVSGKENSGKGDWPSREAEEVYAIVQRMQEESISRVREGAMFFSIHQHAHSIALDELLRLGILRIPHGSSKADLVKAEATALFFPHGLGHHLGLEVHDVAPDSGTVPVTSSSSSSSSRVTAVTAQCQDGLMSVTEHRPPCTLSAPPLAAGMVITVEPGIYFNRLAIDQARAERDKPGSKGRFVDFDVVERYMAVGGVRIEDDVLVTKDGSRNLTDAPKGQDMLDMIYDRC.

Positions 233, 244, 409, and 453 each coordinate Mn(2+).

It belongs to the peptidase M24B family. The cofactor is Mn(2+).

It carries out the reaction Release of any N-terminal amino acid, including proline, that is linked to proline, even from a dipeptide or tripeptide.. Functionally, catalyzes the removal of a penultimate prolyl residue from the N-termini of peptides. The protein is Probable Xaa-Pro aminopeptidase MCYG_06503 of Arthroderma otae (strain ATCC MYA-4605 / CBS 113480) (Microsporum canis).